The following is a 123-amino-acid chain: MPTVNQLIRKPRQAQVKRNKVPALQENPQKRGVCTRVYTTTPKKPNSALRKVAKIRLTNGFEVIGYIPGEGHNLQEHSVVMIRGGRVKDLPGVRYHIIRGVLDTQGVKNRKQRRSKYGAKRPK.

D89 carries the 3-methylthioaspartic acid modification.

Belongs to the universal ribosomal protein uS12 family. Part of the 30S ribosomal subunit. Contacts proteins S8 and S17. May interact with IF1 in the 30S initiation complex.

With S4 and S5 plays an important role in translational accuracy. In terms of biological role, interacts with and stabilizes bases of the 16S rRNA that are involved in tRNA selection in the A site and with the mRNA backbone. Located at the interface of the 30S and 50S subunits, it traverses the body of the 30S subunit contacting proteins on the other side and probably holding the rRNA structure together. The combined cluster of proteins S8, S12 and S17 appears to hold together the shoulder and platform of the 30S subunit. The chain is Small ribosomal subunit protein uS12 from Sinorhizobium medicae (strain WSM419) (Ensifer medicae).